The sequence spans 587 residues: MNSQGYDESSSSTAATSGPTSGDPRMGKKQRFMNLIRTTKDVYIPNLTSSISQKTMDGIRSTTNSFEGYNDLPMELPHNTTITYFPTYTTTNLVDPDGLSAPRKDFETTVRCAVSYPGNPTSRRNRWLLSLCKQYLRTGTAEADVAPVVPPHLEEDSGDLNDSQSSIESSLSSKSENRYSHMGIQEEDVLNERIQGFLSKKVPNTPVVVDLLPKDKLRGDTASFFGTTDSYGNLLIKAETDFLPSKINITLDTPIEGHADPISETFPANYVSPYGIGLISDIDDTIKHTGVTGDRRSMFRNVFIHDVQSWVIDGVPLWYKTLHDVADVDFFYVSNSPIQTFTLLKQYICANFPPGPIFLKQYSGNFFSTIMTSSANRKIQPIANILKDFPKKKFILVGDSGEHDLEAYTTTALQFPNQILAIYIRCCSNSMSDVPSHDEEVMNEVNNIIELQQRPMQMTKSTVRTRRRPPPPPIPSTQKPSLTEEQTESIRMSRRNKDENNAKRVAPPPLPNRQLPNLDANTYYVPSSQNDYGMYGAFMDKKADEWKRRVMDSIQKLSNQDTTLMFFSDPALSLEDSIRRIREKYSN.

Disordered regions lie at residues 1 to 28 (MNSQ…RMGK) and 150 to 178 (PPHL…SENR). Composition is skewed to low complexity over residues 9–22 (SSSS…PTSG) and 163–174 (SQSSIESSLSSK). The DXDXT motif signature appears at 281 to 285 (DIDDT). The disordered stretch occupies residues 452 to 521 (QQRPMQMTKS…NRQLPNLDAN (70 aa)). The tract at residues 467–483 (RRPPPPPIPSTQKPSLT) is interaction with SH3 domain of ABP1.

In terms of assembly, monomer. Interacts with ABP1. Mg(2+) serves as cofactor. In terms of processing, N-glycosylated.

It is found in the cytoplasm. The protein resides in the cytoskeleton. The protein localises to the actin patch. The catalysed reaction is a 1,2-diacyl-sn-glycero-3-phosphate + H2O = a 1,2-diacyl-sn-glycerol + phosphate. It carries out the reaction 1,2-di-(9Z-octadecenoyl)-sn-glycero-3-phosphate + H2O = 1,2-di-(9Z-octadecenoyl)-sn-glycerol + phosphate. Inhibited by N-ethylmaleimide. Mg(2+)-dependent phosphatidate (PA) phosphatase which catalyzes the dephosphorylation of PA to yield diacylglycerol. May play a role in vesicular trafficking through its PAP activity at cortical actin patches. Can also utilize diacylglycerol pyrophosphate and lyso-PA as substrates with specificity constants 4- and 7-fold lower, respectively, when compared with PA. This Saccharomyces cerevisiae (strain ATCC 204508 / S288c) (Baker's yeast) protein is Phosphatidate phosphatase APP1 (APP1).